A 273-amino-acid polypeptide reads, in one-letter code: Undecaprenyl-diphosphatase (273 aa).

The next 8 helical transmembrane spans lie at 13–35 (GLVE…VFGN), 45–62 (VFEI…VFEY), 82–102 (FVLN…LFGK), 108–128 (LFNP…ILWV), 144–164 (ALRP…LIPG), 186–206 (TEFS…YDVL), 219–239 (LILI…KALL), and 250–270 (FAYY…SGWI).

This sequence belongs to the UppP family.

It localises to the cell inner membrane. The catalysed reaction is di-trans,octa-cis-undecaprenyl diphosphate + H2O = di-trans,octa-cis-undecaprenyl phosphate + phosphate + H(+). Its function is as follows. Catalyzes the dephosphorylation of undecaprenyl diphosphate (UPP). Confers resistance to bacitracin. The chain is Undecaprenyl-diphosphatase from Neisseria meningitidis serogroup C (strain 053442).